The chain runs to 81 residues: Spore coat protein F-like protein YraG (81 aa).

It belongs to the CotF family.

Its subcellular location is the spore coat. In Bacillus subtilis (strain 168), this protein is Spore coat protein F-like protein YraG (yraG).